Reading from the N-terminus, the 648-residue chain is DNA polymerase (648 aa).

The protein belongs to the DNA polymerase type-A family.

It carries out the reaction DNA(n) + a 2'-deoxyribonucleoside 5'-triphosphate = DNA(n+1) + diphosphate. Replicates the viral genomic DNA. This polymerase possesses two enzymatic activities: DNA synthesis (polymerase) and an exonucleolytic activity that degrades single-stranded DNA in the 3'-5' direction. The protein is DNA polymerase (L) of Bacillus subtilis (Bacteriophage SP02).